Consider the following 305-residue polypeptide: LVIVGGGPGGLAAAIYAGRAGLTPVIFLGIETSSQLMTTTEVENYPGFKTIQGPDLVQNQVDQAEHCGAQLFYEDVTKIDATARPFKITHGYENEIMTCDALIFATGSTAQRLDVIGEKQFWQKGVSACAVCDSMMAKNKDTVVVGGGDVACEEASYLSNIASKVYLILRRDAFRASAAMVQRVKSNPKIEIIYNSAVQEIKGETRVNQILVKNLKSGDITPLKVEALFWCIGHTPQTRLLKGQVKMSENGYILVENQTQYTNVPGIFAAGDCCDWIYRQAIVAAGSGCKAALDAERWLASNGGH.

FAD is bound at residue 28–35 (LGIETSSQ). The cysteines at positions 129 and 132 are disulfide-linked. FAD is bound at residue 272–281 (DCCDWIYRQA).

Belongs to the class-II pyridine nucleotide-disulfide oxidoreductase family. In terms of assembly, homodimer. It depends on FAD as a cofactor.

Its subcellular location is the cytoplasm. The catalysed reaction is [thioredoxin]-dithiol + NADP(+) = [thioredoxin]-disulfide + NADPH + H(+). The polypeptide is Thioredoxin reductase (TRXB) (Spironucleus barkhanus).